Here is a 619-residue protein sequence, read N- to C-terminus: tRNA (guanine(37)-N(1))-methyltransferase 2 (619 aa).

The transit peptide at 1 to 10 (MVSKLSLFRA) directs the protein to the mitochondrion. Residues Arg-434, 472-473 (DL), 500-501 (DG), and Asn-523 each bind S-adenosyl-L-methionine.

This sequence belongs to the class I-like SAM-binding methyltransferase superfamily. TRM5/TYW2 family. As to quaternary structure, monomer.

It localises to the mitochondrion matrix. The protein resides in the nucleus. It is found in the cytoplasm. The enzyme catalyses guanosine(37) in tRNA + S-adenosyl-L-methionine = N(1)-methylguanosine(37) in tRNA + S-adenosyl-L-homocysteine + H(+). Functionally, specifically methylates the N1 position of guanosine-37 in various cytoplasmic and mitochondrial tRNAs. Methylation is not dependent on the nature of the nucleoside 5' of the target nucleoside. This is the first step in the biosynthesis of wybutosine (yW), a modified base adjacent to the anticodon of tRNAs and required for accurate decoding. In Arabidopsis thaliana (Mouse-ear cress), this protein is tRNA (guanine(37)-N(1))-methyltransferase 2.